A 256-amino-acid chain; its full sequence is Ribonuclease HII (256 aa).

The RNase H type-2 domain occupies 72-256; sequence ALICGIDEVG…TFEPIKSLVN (185 aa). A divalent metal cation contacts are provided by D78, E79, and D170.

It belongs to the RNase HII family. Mn(2+) serves as cofactor. Mg(2+) is required as a cofactor.

It is found in the cytoplasm. The catalysed reaction is Endonucleolytic cleavage to 5'-phosphomonoester.. Functionally, endonuclease that specifically degrades the RNA of RNA-DNA hybrids. The sequence is that of Ribonuclease HII from Staphylococcus saprophyticus subsp. saprophyticus (strain ATCC 15305 / DSM 20229 / NCIMB 8711 / NCTC 7292 / S-41).